Here is a 441-residue protein sequence, read N- to C-terminus: 3-phosphoshikimate 1-carboxyvinyltransferase (441 aa).

The segment at 1-21 (MSANGPSHPARELKAGGSLSG) is disordered. The 3-phosphoshikimate site is built by Lys-29, Ser-30, and Arg-34. Phosphoenolpyruvate is bound at residue Lys-29. Positions 103 and 132 each coordinate phosphoenolpyruvate. Residues Ser-177, Gln-179, Asp-328, and Lys-355 each coordinate 3-phosphoshikimate. Gln-179 is a binding site for phosphoenolpyruvate. The active-site Proton acceptor is Asp-328. 2 residues coordinate phosphoenolpyruvate: Arg-359 and Arg-401.

This sequence belongs to the EPSP synthase family. As to quaternary structure, monomer.

The protein resides in the cytoplasm. The catalysed reaction is 3-phosphoshikimate + phosphoenolpyruvate = 5-O-(1-carboxyvinyl)-3-phosphoshikimate + phosphate. The protein operates within metabolic intermediate biosynthesis; chorismate biosynthesis; chorismate from D-erythrose 4-phosphate and phosphoenolpyruvate: step 6/7. In terms of biological role, catalyzes the transfer of the enolpyruvyl moiety of phosphoenolpyruvate (PEP) to the 5-hydroxyl of shikimate-3-phosphate (S3P) to produce enolpyruvyl shikimate-3-phosphate and inorganic phosphate. The sequence is that of 3-phosphoshikimate 1-carboxyvinyltransferase from Parasynechococcus marenigrum (strain WH8102).